The following is a 431-amino-acid chain: Adenylosuccinate synthetase (431 aa).

GTP-binding positions include 13-19 and 41-43; these read GDEGKGK and GHT. Residue aspartate 14 is the Proton acceptor of the active site. Mg(2+) is bound by residues aspartate 14 and glycine 41. Residues 14–17, 39–42, threonine 130, arginine 144, glutamine 225, threonine 240, and arginine 304 each bind IMP; these read DEGK and NAGH. The active-site Proton donor is histidine 42. A substrate-binding site is contributed by 300–306; it reads ATTGRQR. Residues arginine 306, 332-334, and 414-416 each bind GTP; these read KLD and STG.

This sequence belongs to the adenylosuccinate synthetase family. As to quaternary structure, homodimer. Requires Mg(2+) as cofactor.

The protein localises to the cytoplasm. The catalysed reaction is IMP + L-aspartate + GTP = N(6)-(1,2-dicarboxyethyl)-AMP + GDP + phosphate + 2 H(+). Its pathway is purine metabolism; AMP biosynthesis via de novo pathway; AMP from IMP: step 1/2. Plays an important role in the de novo pathway of purine nucleotide biosynthesis. Catalyzes the first committed step in the biosynthesis of AMP from IMP. The chain is Adenylosuccinate synthetase from Saccharophagus degradans (strain 2-40 / ATCC 43961 / DSM 17024).